Reading from the N-terminus, the 240-residue chain is Uridylate kinase (240 aa).

K13 to G16 contributes to the ATP binding site. The tract at residues G21 to G26 is involved in allosteric activation by GTP. G55 provides a ligand contact to UMP. Residues G56 and R60 each contribute to the ATP site. Residues D75 and T136–T143 contribute to the UMP site. ATP-binding residues include T163, Q164, Y169, and D172.

It belongs to the UMP kinase family. In terms of assembly, homohexamer.

The protein localises to the cytoplasm. It catalyses the reaction UMP + ATP = UDP + ADP. Its pathway is pyrimidine metabolism; CTP biosynthesis via de novo pathway; UDP from UMP (UMPK route): step 1/1. With respect to regulation, allosterically activated by GTP. Inhibited by UTP. Functionally, catalyzes the reversible phosphorylation of UMP to UDP. This Sinorhizobium medicae (strain WSM419) (Ensifer medicae) protein is Uridylate kinase.